We begin with the raw amino-acid sequence, 938 residues long: Translation initiation factor IF-2 (938 aa).

Residues 57 to 205 show a composition bias toward basic and acidic residues; it reads DKSKKVASKE…PKSEETKSEE (149 aa). A disordered region spans residues 57–350; it reads DKSKKVASKE…RSADDLAQQE (294 aa). Positions 206–215 are enriched in acidic residues; sequence TTEGGESEEK. The segment covering 248-259 has biased composition (basic and acidic residues); that stretch reads KKEEKKEDDKKD. Basic residues-rich tracts occupy residues 260 to 270 and 285 to 296; these read KDRRKKRRRRI and GAKKGGRTRSKP. Residues 297 to 319 show a composition bias toward basic and acidic residues; it reads ITKEEPTEEEVQKQVRETLEKLQ. The span at 323 to 333 shows a compositional bias: basic residues; it reads SKGKGAKYRRQ. The segment covering 334–344 has biased composition (basic and acidic residues); sequence KRDEHRQRSAD. The 169-residue stretch at 434-602 folds into the tr-type G domain; sequence TRAPIVTVMG…KVLLEAEILE (169 aa). Residues 443-450 form a G1 region; sequence GHVDHGKT. Position 443–450 (443–450) interacts with GTP; the sequence is GHVDHGKT. Residues 468–472 are G2; sequence GITQH. Residues 490–493 form a G3 region; sequence DTPG. GTP-binding positions include 490–494 and 544–547; these read DTPGH and NKSD. The tract at residues 544-547 is G4; the sequence is NKSD. A G5 region spans residues 580 to 582; that stretch reads SAK.

This sequence belongs to the TRAFAC class translation factor GTPase superfamily. Classic translation factor GTPase family. IF-2 subfamily.

It localises to the cytoplasm. One of the essential components for the initiation of protein synthesis. Protects formylmethionyl-tRNA from spontaneous hydrolysis and promotes its binding to the 30S ribosomal subunits. Also involved in the hydrolysis of GTP during the formation of the 70S ribosomal complex. The sequence is that of Translation initiation factor IF-2 from Christiangramia forsetii (strain DSM 17595 / CGMCC 1.15422 / KT0803) (Gramella forsetii).